The following is a 445-amino-acid chain: Phosphoglucosamine mutase (445 aa).

The active-site Phosphoserine intermediate is S102. Mg(2+)-binding residues include S102, D241, D243, and D245. At S102 the chain carries Phosphoserine.

Belongs to the phosphohexose mutase family. Mg(2+) serves as cofactor. Post-translationally, activated by phosphorylation.

The enzyme catalyses alpha-D-glucosamine 1-phosphate = D-glucosamine 6-phosphate. Its function is as follows. Catalyzes the conversion of glucosamine-6-phosphate to glucosamine-1-phosphate. The sequence is that of Phosphoglucosamine mutase from Shewanella sp. (strain ANA-3).